We begin with the raw amino-acid sequence, 171 residues long: MTTASSFEKDELLKCGHGEMFGAGNAQLPVGNMLMMDRITHISTEGGVYGKGEIIAELDINPDLWFFECHFPGDPVMPGCLGLDAMWQLVGFFLGWKGNKGRGRALGSGEVKFTGQILPTAKKVTFHINLKRVIERKLVMGIADGSVKVDGREIYTAKDLRVGLFTSTDNF.

His70 is an active-site residue.

This sequence belongs to the thioester dehydratase family. FabA subfamily. As to quaternary structure, homodimer.

Its subcellular location is the cytoplasm. The enzyme catalyses a (3R)-hydroxyacyl-[ACP] = a (2E)-enoyl-[ACP] + H2O. It catalyses the reaction (3R)-hydroxydecanoyl-[ACP] = (2E)-decenoyl-[ACP] + H2O. The catalysed reaction is (2E)-decenoyl-[ACP] = (3Z)-decenoyl-[ACP]. It functions in the pathway lipid metabolism; fatty acid biosynthesis. Functionally, necessary for the introduction of cis unsaturation into fatty acids. Catalyzes the dehydration of (3R)-3-hydroxydecanoyl-ACP to E-(2)-decenoyl-ACP and then its isomerization to Z-(3)-decenoyl-ACP. Can catalyze the dehydratase reaction for beta-hydroxyacyl-ACPs with saturated chain lengths up to 16:0, being most active on intermediate chain length. The chain is 3-hydroxydecanoyl-[acyl-carrier-protein] dehydratase from Marinomonas sp. (strain MWYL1).